We begin with the raw amino-acid sequence, 433 residues long: Serine/threonine-protein kinase toxin HipA (433 aa).

The residue at position 147 (S147) is a Phosphoserine; by autocatalysis. Residues 151-154, K178, and 220-222 each bind ATP; these read VQPK and ERF. D306 serves as the catalytic Proton acceptor. ATP is bound by residues 308–311 and 327–328; these read HGKN and YD. 2 DNA-binding regions span residues 380–384 and R429; that span reads RIARR.

It belongs to the HipA Ser/Thr kinase family. Monomer. Forms a HipA(2)HipB(2)-DNA complex with cognate antitoxin HipB; has higher affinity for the latter when HipB is prebound to DNA and HipA is phosphorylated. Binds DNA in the ternary complex.

The catalysed reaction is L-seryl-[protein] + ATP = O-phospho-L-seryl-[protein] + ADP + H(+). It carries out the reaction L-threonyl-[protein] + ATP = O-phospho-L-threonyl-[protein] + ADP + H(+). Toxic component of a type II toxin-antitoxin (TA) system; overexpression in wild-type temporarily inhibits cell growth, overexpression in a hipAB deletion leads to acute growth inhibition. The toxic effect of HipA is neutralized by its cognate antitoxin HipB. In the ternary phosphoserine-HipA-HipB-DNA complex the DNA is bent about 125 degrees; all HipA in the crystallized ternary complex is phosphorylated. In E.coli phosphorylation of HipA is thought to release HipB from the HipA-HipB-DNA complex, suggesting the complex functions differently in the 2 bacteria. Phosphorylates Glu-tRNA-ligase (GltX, on 'Ser-239') in vivo, with HipB probably acts as a corepressor for transcription of the hipBA promoter. The sequence is that of Serine/threonine-protein kinase toxin HipA from Shewanella oneidensis (strain ATCC 700550 / JCM 31522 / CIP 106686 / LMG 19005 / NCIMB 14063 / MR-1).